The sequence spans 211 residues: MTIRYPSGQQPPNVGRAEQPIVAPHSSSFAKRGMSLEKEINDANRYYLATEQAVIYKKPTPIQLVKVDYPKRSAAVVKEAYFKRPSTTDYNGVYQGYYVDFDAKETRGKLSFPLKNFHQHQVDHFRRCLAQGGVCFAFIRFTTLDLTYLLPASDLIAFWDQQGRGGRKSVPLTTIKDRGFRVKTGLTPVLDYLPALDQLIAANQAKGADHE.

Mg(2+) contacts are provided by threonine 87, aspartate 89, aspartate 102, and glutamine 121.

It belongs to the RecU family. It depends on Mg(2+) as a cofactor.

It is found in the cytoplasm. The catalysed reaction is Endonucleolytic cleavage at a junction such as a reciprocal single-stranded crossover between two homologous DNA duplexes (Holliday junction).. Functionally, endonuclease that resolves Holliday junction intermediates in genetic recombination. Cleaves mobile four-strand junctions by introducing symmetrical nicks in paired strands. Promotes annealing of linear ssDNA with homologous dsDNA. Required for DNA repair, homologous recombination and chromosome segregation. In Limosilactobacillus fermentum (strain NBRC 3956 / LMG 18251) (Lactobacillus fermentum), this protein is Holliday junction resolvase RecU.